We begin with the raw amino-acid sequence, 124 residues long: Galanin peptides (124 aa).

Residues M1–S19 form the signal peptide. The propeptide occupies A20–E30. T61 carries the threonine amide modification. 2 positions are modified to phosphoserine: S117 and S118.

Belongs to the galanin family. In terms of tissue distribution, expressed in retinal progenitor cells and retinal ganglion cells (at protein level).

The protein resides in the secreted. Endocrine hormone of the central and peripheral nervous systems that binds and activates the G protein-coupled receptors GALR1, GALR2, and GALR3. This small neuropeptide may regulate diverse physiologic functions including contraction of smooth muscle of the gastrointestinal and genitourinary tract, growth hormone and insulin release and adrenal secretion. This chain is Galanin peptides (Gal), found in Mus musculus (Mouse).